The chain runs to 327 residues: Beta-ketoacyl-[acyl-carrier-protein] synthase III (327 aa).

Catalysis depends on residues Cys112 and His253. The ACP-binding stretch occupies residues 254-258; it reads QANER. Asn283 is a catalytic residue.

It belongs to the thiolase-like superfamily. FabH family. In terms of assembly, homodimer.

It is found in the cytoplasm. The catalysed reaction is malonyl-[ACP] + acetyl-CoA + H(+) = 3-oxobutanoyl-[ACP] + CO2 + CoA. It participates in lipid metabolism; fatty acid biosynthesis. Catalyzes the condensation reaction of fatty acid synthesis by the addition to an acyl acceptor of two carbons from malonyl-ACP. Catalyzes the first condensation reaction which initiates fatty acid synthesis and may therefore play a role in governing the total rate of fatty acid production. Possesses both acetoacetyl-ACP synthase and acetyl transacylase activities. Its substrate specificity determines the biosynthesis of branched-chain and/or straight-chain of fatty acids. This Chlamydia trachomatis serovar A (strain ATCC VR-571B / DSM 19440 / HAR-13) protein is Beta-ketoacyl-[acyl-carrier-protein] synthase III.